Consider the following 395-residue polypeptide: Prostaglandin D2 receptor 2 (395 aa).

Topologically, residues 1-33 (MSANATLKPLCPILEQMSRLQSHSNTSIRYIDH) are extracellular. N-linked (GlcNAc...) asparagine glycosylation is found at Asn4 and Asn25. Residues 34–56 (AAVLLHGLASLLGLVENGVILFV) form a helical membrane-spanning segment. The Cytoplasmic segment spans residues 57–67 (VGCRMRQTVVT). Residues 68-89 (TWVLHLALSDLLASASLPFFTY) traverse the membrane as a helical segment. At 90-106 (FLAVGHSWELGTTFCKL) the chain is on the extracellular side. Cysteines 104 and 182 form a disulfide. The chain crosses the membrane as a helical span at residues 107–127 (HSSIFFLNMFASGFLLSAISL). Residues 128 to 146 (DRCLQVVRPVWAQNHRTVA) are Cytoplasmic-facing. A helical transmembrane segment spans residues 147–168 (AAHKVCLVLWALAVLNTVPYFV). The Extracellular segment spans residues 169–210 (FRDTISRLDGRIMCYYNVLLLNPGPDRDATCNSRQVALAVSK). The chain crosses the membrane as a helical span at residues 211-231 (FLLAFLVPLAIIASSHAAVSL). At 232–247 (RLQHRGRRRPGRFVRL) the chain is on the cytoplasmic side. A helical transmembrane segment spans residues 248–269 (VAAVVAAFALCWGPYHVFSLLE). Residues 270–288 (ARAHANPGLRPLVWRGLPF) lie on the Extracellular side of the membrane. Residues 289-308 (VTSLAFFNSVANPVLYVLTC) form a helical membrane-spanning segment. The Cytoplasmic portion of the chain corresponds to 309-395 (PDMLRKLRRS…LNRALSSTSS (87 aa)). The Involved in the recycling of CRTH2 signature appears at 330–333 (DSEL). Residues Ser331 and Ser345 each carry the phosphoserine modification. Residues 333-363 (LGGAGSSRRRRTSSTARSASPLALCSRPEEP) are disordered.

Belongs to the G-protein coupled receptor 1 family. Phosphorylated. Widespread expression. High expression in stomach, small intestine, heart and thymus. Intermediate expression in colon, spinal cord and peripheral blood and low expression in brain, skeletal muscle and spleen. Expressed also on Th2- and Tc2- type cells, eosinophils and basophils.

It is found in the cell membrane. Receptor for prostaglandin D2 (PGD2). Coupled to the G(i)-protein. Receptor activation may result in pertussis toxin-sensitive decreases in cAMP levels and Ca(2+) mobilization. PI3K signaling is also implicated in mediating PTGDR2 effects. PGD2 induced receptor internalization. CRTH2 internalization can be regulated by diverse kinases such as, PKC, PKA, GRK2, GPRK5/GRK5 and GRK6. Receptor activation is responsible, at least in part, in immune regulation and allergic/inflammation responses. The polypeptide is Prostaglandin D2 receptor 2 (PTGDR2) (Homo sapiens (Human)).